A 116-amino-acid chain; its full sequence is MDKKTSRLRRATRARKKIQELGVNRLVVHRTPRHTYAQVISPANVVLAAASTAEKAVSEQLKYTGNVDAAKAVGKTVAERAIEKGVAVVAFDRSGFKYHGRVAALADAAREAGLKF.

It belongs to the universal ribosomal protein uL18 family. As to quaternary structure, part of the 50S ribosomal subunit; part of the 5S rRNA/L5/L18/L25 subcomplex. Contacts the 5S and 23S rRNAs.

This is one of the proteins that bind and probably mediate the attachment of the 5S RNA into the large ribosomal subunit, where it forms part of the central protuberance. The chain is Large ribosomal subunit protein uL18 from Shewanella piezotolerans (strain WP3 / JCM 13877).